The following is a 434-amino-acid chain: MNALAKIKAFRSYVPLLQGNTKTIYLNQSFQAPMNMLVSTALQGYINEGLYNPHPKPMWKERTEETRSLLAKLLNASTKDSITFTRDTTEGLNLFQRSLKWKPGDNVVILDNEHPNQGFGWIALQNDGLEVRLVPNEGQYHANASTFAPYVDSRTKAIGLSSVMFHSGQKNDVKDIANAFRPKGIHVLADLTQQVGLSKIDVQDLNVSACAFSCHKGLGCPTGLGVLYVSPLAISELRSTPPFVGGGAVEDFKEDLKLKLNAKYHQSALRYEHTNNAYMLITALRAYLKFLLKVGISNVERYLQGLGKDLIKELESLNVSVIGYKDFDKHSSHSYVLKILNPEWFDFLRQQGVCVSRFESGIRVSFGLYNTSKDIIKFISVIRKGLALNIPLNIRPPQRIAVMDNPLVGISDEAIAAMKLPANTLSNRPLAANI.

K216 carries the N6-(pyridoxal phosphate)lysine modification.

This is an uncharacterized protein from Schizosaccharomyces pombe (strain 972 / ATCC 24843) (Fission yeast).